The following is a 175-amino-acid chain: ATP-dependent protease subunit HslV (175 aa).

Residue Thr2 is part of the active site. Residues Gly157, Cys160, and Thr163 each coordinate Na(+).

The protein belongs to the peptidase T1B family. HslV subfamily. In terms of assembly, a double ring-shaped homohexamer of HslV is capped on each side by a ring-shaped HslU homohexamer. The assembly of the HslU/HslV complex is dependent on binding of ATP.

Its subcellular location is the cytoplasm. The catalysed reaction is ATP-dependent cleavage of peptide bonds with broad specificity.. Allosterically activated by HslU binding. In terms of biological role, protease subunit of a proteasome-like degradation complex believed to be a general protein degrading machinery. This chain is ATP-dependent protease subunit HslV, found in Photobacterium profundum (strain SS9).